The following is a 67-amino-acid chain: MGEISITKLLVVAALVVLLFGTRKLRTLGGDLGTAIKGFKKAMNDEDAGAKKEAGGDIQAEKLSHKE.

A helical membrane pass occupies residues 4–21 (ISITKLLVVAALVVLLFG). The interval 46–67 (EDAGAKKEAGGDIQAEKLSHKE) is disordered.

The protein belongs to the TatA/E family. TatE subfamily.

It localises to the cell inner membrane. Functionally, part of the twin-arginine translocation (Tat) system that transports large folded proteins containing a characteristic twin-arginine motif in their signal peptide across membranes. TatE shares overlapping functions with TatA. The sequence is that of Probable Sec-independent protein translocase protein TatE from Citrobacter koseri (strain ATCC BAA-895 / CDC 4225-83 / SGSC4696).